Here is a 155-residue protein sequence, read N- to C-terminus: Large ribosomal subunit protein uL22c (155 aa).

It belongs to the universal ribosomal protein uL22 family. In terms of assembly, part of the 50S ribosomal subunit.

The protein resides in the plastid. It is found in the chloroplast. Functionally, this protein binds specifically to 23S rRNA. Its function is as follows. The globular domain of the protein is located near the polypeptide exit tunnel on the outside of the subunit, while an extended beta-hairpin is found that lines the wall of the exit tunnel in the center of the 70S ribosome. The polypeptide is Large ribosomal subunit protein uL22c (rpl22) (Nicotiana sylvestris (Wood tobacco)).